Reading from the N-terminus, the 218-residue chain is dTTP/UTP pyrophosphatase (218 aa).

The Proton acceptor role is filled by Asp-76.

Belongs to the Maf family. YhdE subfamily. Requires a divalent metal cation as cofactor.

The protein resides in the cytoplasm. It catalyses the reaction dTTP + H2O = dTMP + diphosphate + H(+). The enzyme catalyses UTP + H2O = UMP + diphosphate + H(+). Its function is as follows. Nucleoside triphosphate pyrophosphatase that hydrolyzes dTTP and UTP. May have a dual role in cell division arrest and in preventing the incorporation of modified nucleotides into cellular nucleic acids. This Cytophaga hutchinsonii (strain ATCC 33406 / DSM 1761 / CIP 103989 / NBRC 15051 / NCIMB 9469 / D465) protein is dTTP/UTP pyrophosphatase.